The chain runs to 508 residues: D-alanine--D-alanyl carrier protein ligase (508 aa).

152–153 (TS) provides a ligand contact to ATP. D-alanine is bound at residue Asp198. An ATP-binding site is contributed by 293 to 298 (NTYGPT). Val302 is a binding site for D-alanine. ATP is bound by residues Asp384, 396 to 399 (YRGR), and Lys495. D-alanine is bound at residue Lys495.

The protein belongs to the ATP-dependent AMP-binding enzyme family. DltA subfamily.

The protein resides in the cytoplasm. It carries out the reaction holo-[D-alanyl-carrier protein] + D-alanine + ATP = D-alanyl-[D-alanyl-carrier protein] + AMP + diphosphate. It participates in cell wall biogenesis; lipoteichoic acid biosynthesis. Functionally, catalyzes the first step in the D-alanylation of lipoteichoic acid (LTA), the activation of D-alanine and its transfer onto the D-alanyl carrier protein (Dcp) DltC. In an ATP-dependent two-step reaction, forms a high energy D-alanyl-AMP intermediate, followed by transfer of the D-alanyl residue as a thiol ester to the phosphopantheinyl prosthetic group of the Dcp. D-alanylation of LTA plays an important role in modulating the properties of the cell wall in Gram-positive bacteria, influencing the net charge of the cell wall. The chain is D-alanine--D-alanyl carrier protein ligase from Lactiplantibacillus plantarum (strain ATCC BAA-793 / NCIMB 8826 / WCFS1) (Lactobacillus plantarum).